A 368-amino-acid polypeptide reads, in one-letter code: Glutaminyl-peptide cyclotransferase (368 aa).

The N-terminal stretch at Met1 to Ala23 is a signal peptide. Asn53 carries an N-linked (GlcNAc...) asparagine glycan. A disulfide bond links Cys143 and Cys169. Asp164 is a binding site for Zn(2+). Glu207 acts as the Proton acceptor in catalysis. Position 208 (Glu208) interacts with Zn(2+). The active-site Proton acceptor is Asp254. Asn292 is a glycosylation site (N-linked (GlcNAc...) asparagine). His336 is a Zn(2+) binding site. The N-linked (GlcNAc...) asparagine glycan is linked to Asn352.

This sequence belongs to the glutaminyl-peptide cyclotransferase family. As to expression, expressed by the venom gland.

It localises to the secreted. The catalysed reaction is N-terminal L-glutaminyl-[peptide] = N-terminal 5-oxo-L-prolyl-[peptide] + NH4(+). In terms of biological role, responsible for the biosynthesis of pyroglutamyl peptides. Has a bias against acidic and tryptophan residues adjacent to the N-terminal glutaminyl residue and a lack of importance of chain length after the second residue. Also catalyzes N-terminal pyroglutamate formation. The polypeptide is Glutaminyl-peptide cyclotransferase (QPCT) (Boiga irregularis (Brown tree snake)).